The sequence spans 843 residues: Complement component C7 (843 aa).

The first 22 residues, 1 to 22, serve as a signal peptide directing secretion; the sequence is MKVISLFILVGFIGEFQSFSSA. One can recognise a TSP type-1 1 domain in the interval 27–80; the sequence is NCQWDFYAPWSECNGCTKTQTRRRSVAVYGQYGGQPCVGNAFETQSCEPTRGCP. Disulfide bonds link cysteine 28–cysteine 63, cysteine 39–cysteine 73, cysteine 42–cysteine 79, cysteine 85–cysteine 96, cysteine 91–cysteine 109, cysteine 103–cysteine 119, and cysteine 128–cysteine 165. C-linked (Man) tryptophan glycosylation occurs at tryptophan 36. Positions 83 to 121 constitute an LDL-receptor class A domain; it reads EGCGERFRCFSGQCISKSLVCNGDSDCDEDSADEDRCED. Positions 108–120 are enriched in acidic residues; that stretch reads DCDEDSADEDRCE. Residues 108–143 form a disordered region; the sequence is DCDEDSADEDRCEDSERRPSCDIDKPPPNIELTGNG. Residues 121-132 show a composition bias toward basic and acidic residues; sequence DSERRPSCDIDK. One can recognise an MACPF domain in the interval 124–456; the sequence is RRPSCDIDKP…EYLDEFDPCH (333 aa). N-linked (GlcNAc...) asparagine glycosylation occurs at asparagine 202. The tract at residues 219–240 is disordered; sequence SRKRSFFRSSSSSSRSYTSHTN. Low complexity predominate over residues 225–234; the sequence is FRSSSSSSRS. Intrachain disulfides connect cysteine 337-cysteine 353, cysteine 433-cysteine 560, cysteine 455-cysteine 505, cysteine 457-cysteine 473, cysteine 460-cysteine 475, cysteine 477-cysteine 486, cysteine 512-cysteine 545, cysteine 523-cysteine 535, cysteine 571-cysteine 613, cysteine 599-cysteine 626, cysteine 631-cysteine 673, and cysteine 659-cysteine 688. One can recognise an EGF-like domain in the interval 457-487; sequence CRPCQNGGLATVEGTHCLCHCKPYTFGAACE. Positions 500 to 549 constitute a TSP type-1 2 domain; that stretch reads DGGWSCWSSWSPCVQGKKTRSRECNNPPPSGGGRSCVGETTESTQCEDEE. C-linked (Man) tryptophan; partial glycans are attached at residues tryptophan 503, tryptophan 506, and tryptophan 509. The disordered stretch occupies residues 516-538; the sequence is KKTRSRECNNPPPSGGGRSCVGE. CCP stretches follow at residues 545–615 and 616–693; these read CEDE…RCGE and DLRW…QKEN. Sushi domains follow at residues 569–628 and 629–690; these read EFCP…HCQK and IACV…RCVQ. Factor I module (FIM) regions lie at residues 695–770 and 771–843; these read LTQA…ASAE and KACG…AETQ. A glycan (O-linked (GalNAc...) threonine) is linked at threonine 696. Disulfide bonds link cysteine 702/cysteine 713, cysteine 715/cysteine 750, cysteine 721/cysteine 743, cysteine 728/cysteine 763, cysteine 773/cysteine 782, cysteine 776/cysteine 789, cysteine 791/cysteine 825, cysteine 797/cysteine 818, and cysteine 805/cysteine 838. A glycan (N-linked (GlcNAc...) (complex) asparagine) is linked at asparagine 754.

The protein belongs to the complement C6/C7/C8/C9 family. In terms of assembly, monomer or dimer; as a C5b-7 complex it can also form multimeric rosettes. Component of the membrane attack complex (MAC), composed of complement C5b, C6, C7, C8A, C8B, C8G and multiple copies of the pore-forming subunit C9. In terms of processing, C-, N- and O-glycosylated. O-glycosylated with core 1 or possibly core 8 glycans.

Its subcellular location is the secreted. It is found in the target cell membrane. Membrane attack complex (MAC) assembly is inhibited by CD59, thereby protecting self-cells from damage during complement activation. MAC assembly is also inhibited by clusterin (CLU) chaperones that inhibit polymerization of C9. In terms of biological role, component of the membrane attack complex (MAC), a multiprotein complex activated by the complement cascade, which inserts into a target cell membrane and forms a pore, leading to target cell membrane rupture and cell lysis. The MAC is initiated by proteolytic cleavage of C5 into complement C5b in response to the classical, alternative, lectin and GZMK complement pathways. The complement pathways consist in a cascade of proteins that leads to phagocytosis and breakdown of pathogens and signaling that strengthens the adaptive immune system. C7 serves as a membrane anchor. During MAC assembly, associates with C5b and C6 to form the C5b-7 complex, a key lipophilic precursor of the MAC complex, which associates with the outer leaflet and reduces the energy for membrane bending. In Homo sapiens (Human), this protein is Complement component C7.